The chain runs to 241 residues: Large ribosomal subunit protein uL1 (241 aa).

This sequence belongs to the universal ribosomal protein uL1 family. As to quaternary structure, part of the 50S ribosomal subunit.

Functionally, binds directly to 23S rRNA. The L1 stalk is quite mobile in the ribosome, and is involved in E site tRNA release. Its function is as follows. Protein L1 is also a translational repressor protein, it controls the translation of the L11 operon by binding to its mRNA. The chain is Large ribosomal subunit protein uL1 from Streptomyces avermitilis (strain ATCC 31267 / DSM 46492 / JCM 5070 / NBRC 14893 / NCIMB 12804 / NRRL 8165 / MA-4680).